The following is a 202-amino-acid chain: Dephospho-CoA kinase (202 aa).

The DPCK domain maps to 4-200; it reads VVGVTGGIGS…QRYLAATVAQ (197 aa). Residue 12-17 coordinates ATP; that stretch reads GSGKSA.

It belongs to the CoaE family.

Its subcellular location is the cytoplasm. It catalyses the reaction 3'-dephospho-CoA + ATP = ADP + CoA + H(+). It functions in the pathway cofactor biosynthesis; coenzyme A biosynthesis; CoA from (R)-pantothenate: step 5/5. Its function is as follows. Catalyzes the phosphorylation of the 3'-hydroxyl group of dephosphocoenzyme A to form coenzyme A. This Idiomarina loihiensis (strain ATCC BAA-735 / DSM 15497 / L2-TR) protein is Dephospho-CoA kinase.